The chain runs to 438 residues: MKTMNPYIRHLILLICCLGGMLAQPLSAAPQDPVEADRIVAVVGSDVITYFELRTRLTAALKQLQKQGTPLPPQDVLERQMLERLIMERAQLQYGRETGMKIDDTQLDLAIGRIAAGNKMTVPQFRAALEKDGVQYAQFREEIRNEMVTVRLREREVDSKLVISEGEIDNYLANQTATGSEEEYQLAHILLRAPESATPEQLQKLRQRGEQALKRARAGENFAQLTAAFSDAPDALQGGDLGWRPLARLPALYAEAGSRLQSGEVSDLLRSSAGFHIVKLVSKRGGSAPASVQQTHARHILIRSSEVLSEAEATRKLEAVRERIANGVDFAEQARLYSQDGSAAKGGELGWLNPGDTVPEFERAMDALKINEVSQVVQSPFGMHLIQVLERRERDVSAERQRAVARQALRERKLDEAYQDWLRQLRDRTYVENRLDEQ.

An N-terminal signal peptide occupies residues 1–28; that stretch reads MKTMNPYIRHLILLICCLGGMLAQPLSA. PpiC domains lie at 181–282 and 292–390; these read EEEY…KLVS and VQQT…QVLE.

It is found in the periplasm. The enzyme catalyses [protein]-peptidylproline (omega=180) = [protein]-peptidylproline (omega=0). Chaperone involved in the correct folding and assembly of outer membrane proteins. Recognizes specific patterns of aromatic residues and the orientation of their side chains, which are found more frequently in integral outer membrane proteins. May act in both early periplasmic and late outer membrane-associated steps of protein maturation. In Dechloromonas aromatica (strain RCB), this protein is Chaperone SurA.